The following is a 344-amino-acid chain: Glycerol-3-phosphate dehydrogenase [NAD(P)+] 2 (344 aa).

NADPH-binding residues include Ser12, Trp13, Arg33, Arg34, and Lys107. Sn-glycerol 3-phosphate contacts are provided by Lys107, Gly138, and Ser140. Ala142 contributes to the NADPH binding site. 5 residues coordinate sn-glycerol 3-phosphate: Lys193, Asp246, Ser256, Arg257, and Asn258. Lys193 (proton acceptor) is an active-site residue. Residue Arg257 participates in NADPH binding. Positions 281 and 283 each coordinate NADPH.

The protein belongs to the NAD-dependent glycerol-3-phosphate dehydrogenase family.

Its subcellular location is the cytoplasm. The catalysed reaction is sn-glycerol 3-phosphate + NAD(+) = dihydroxyacetone phosphate + NADH + H(+). It carries out the reaction sn-glycerol 3-phosphate + NADP(+) = dihydroxyacetone phosphate + NADPH + H(+). It functions in the pathway membrane lipid metabolism; glycerophospholipid metabolism. Catalyzes the reduction of the glycolytic intermediate dihydroxyacetone phosphate (DHAP) to sn-glycerol 3-phosphate (G3P), the key precursor for phospholipid synthesis. This Salinibacter ruber (strain DSM 13855 / M31) protein is Glycerol-3-phosphate dehydrogenase [NAD(P)+] 2.